Here is a 151-residue protein sequence, read N- to C-terminus: Methylglyoxal synthase (151 aa).

The MGS-like domain occupies Arg-6 to Val-151. Substrate contacts are provided by residues His-19, Lys-23, Thr-45–Thr-48, and Ser-65–Gly-66. Asp-71 serves as the catalytic Proton donor/acceptor. Residue His-98 coordinates substrate.

The protein belongs to the methylglyoxal synthase family.

The enzyme catalyses dihydroxyacetone phosphate = methylglyoxal + phosphate. In terms of biological role, catalyzes the formation of methylglyoxal from dihydroxyacetone phosphate. This is Methylglyoxal synthase from Aliivibrio fischeri (strain ATCC 700601 / ES114) (Vibrio fischeri).